The sequence spans 669 residues: Protein fem-1 homolog A (669 aa).

ANK repeat units lie at residues 2-31, 40-70, 82-111, 115-145, 149-178, 182-211, and 214-243; these read DLRTAVYNAARDGKLQLLQKLLSGRSREEL, GGGTPLLIAARYGHLDVVEYLVDRCGASVEA, EGAPPLWAASAAGHLDVVRSLLRRGASVNR, TNSTPLRAACFDGHLEVVRYLVGEHQADLEV, HGHTCLMISCYKGHREIARYLLEQGAQVNR, KGNTALHDCAESGSLEILQLLLGCKARMER, and YGMTPLLAASVTGHTNIVEYLIQEQPGQEQ. A Phosphoserine modification is found at S108. Positions 240–278 are disordered; that stretch reads GQEQVAGGEAQPGLPQEDPSTSQGCAQPQGAPCCSSSPE. TPR repeat units lie at residues 298–332 and 390–423; these read VEALELLGATYVDKKRDLLGALKHWRRAMELRHQG and SYYIRYRGAVYADSGNFERCIRLWKYALDMQQSN. ANK repeat units lie at residues 534 to 576 and 580 to 609; these read NGFT…DPDS and DNNTPLHIAAQNNCPAIMNALIEAGAHMDA.

Belongs to the fem-1 family. As to quaternary structure, component of a CRL2 E3 ubiquitin-protein ligase complex, also named ECS (Elongin BC-CUL2/5-SOCS-box protein) complex, composed of CUL2, Elongin BC (ELOB and ELOC), RBX1 and substrate-specific adapter FEM1A. Interacts with PTGER4. Interacts with NFKB1; the interaction is direct. Phosphorylated; highly phosphorylated in myoblasts and myotubes. Phosphorylation at Ser-108 promotes PGE2-EP4-mediated inhibition of inflammation. Dephosphorylated by protein phosphatase 2A (PP2A). In terms of tissue distribution, present in macrophages derived from peripheral blood monocytes. Also present in atheromata (at protein level).

The protein resides in the mitochondrion. It localises to the cytoplasm. The protein operates within protein modification; protein ubiquitination. Functionally, substrate-recognition component of a Cul2-RING (CRL2) E3 ubiquitin-protein ligase complex of the DesCEND (destruction via C-end degrons) pathway, which recognizes a C-degron located at the extreme C terminus of target proteins, leading to their ubiquitination and degradation. The C-degron recognized by the DesCEND pathway is usually a motif of less than ten residues and can be present in full-length proteins, truncated proteins or proteolytically cleaved forms. The CRL2(FEM1A) complex specifically recognizes proteins with an arginine at the C-terminus: recognizes and binds proteins ending with -Lys/Arg-Xaa-Arg and -Lys/Arg-Xaa-Xaa-Arg C-degrons, such as SIL1 or OR51B2, leading to their ubiquitination and degradation. Promotes ubiquitination and degradation of SLBP. Involved in PGE2-EP4-mediated inhibition of inflammation of macrophages via interaction with NFKB1 and PTGER4. Promotes inflammation in brain microglia through MAP2K4/MKK4-mediated signaling. The chain is Protein fem-1 homolog A from Homo sapiens (Human).